Here is a 246-residue protein sequence, read N- to C-terminus: UL16-binding protein 2 (246 aa).

The first 25 residues, 1-25, serve as a signal peptide directing secretion; it reads MAAAAATKILLCLPLLLLLSGWSRA. Residues 29-117 form an MHC class I alpha-1 like region; the sequence is DPHSLCYDIT…IQLENYTPKE (89 aa). The cysteines at positions 50 and 66 are disulfide-linked. N-linked (GlcNAc...) asparagine glycans are attached at residues Asn-68 and Asn-82. Positions 118-210 are MHC class I alpha-2 like; the sequence is PLTLQARMSC…MDSTLEPSAG (93 aa). Cys-127 and Cys-190 are oxidised to a cystine. An a protein-binding site is contributed by Ser-216. Ser-217 carries the GPI-anchor amidated serine lipid modification. The propeptide at 218 to 246 is removed in mature form; it reads GTTQLRATATTLILCCLLIILPCFILPGI.

Belongs to the MHC class I family. As to quaternary structure, interacts with KLRK1/NKG2D. Does not bind to beta2-microglobulin. In terms of assembly, (Microbial infection) In CMV-infected cells, interacts with the viral glycoprotein UL16; this interaction causes ULBP2 retention in the endoplasmic reticulum and cis-Golgi and prevents binding to and activation of KLRK1/NKG2D, providing CMV with an immune evasion mechanism. In terms of tissue distribution, expressed in various types of cancer cell lines and in the fetus, but not in normal tissues.

It is found in the cell membrane. The protein localises to the endoplasmic reticulum. The protein resides in the secreted. Its function is as follows. Binds and activates the KLRK1/NKG2D receptor, mediating natural killer cell cytotoxicity. The sequence is that of UL16-binding protein 2 from Homo sapiens (Human).